Reading from the N-terminus, the 202-residue chain is Peptidyl-tRNA hydrolase (202 aa).

Tyr-14 contributes to the tRNA binding site. The active-site Proton acceptor is His-19. Residues Tyr-64, Asn-66, and Asn-112 each coordinate tRNA.

Belongs to the PTH family. As to quaternary structure, monomer.

The protein localises to the cytoplasm. The enzyme catalyses an N-acyl-L-alpha-aminoacyl-tRNA + H2O = an N-acyl-L-amino acid + a tRNA + H(+). In terms of biological role, hydrolyzes ribosome-free peptidyl-tRNAs (with 1 or more amino acids incorporated), which drop off the ribosome during protein synthesis, or as a result of ribosome stalling. Functionally, catalyzes the release of premature peptidyl moieties from peptidyl-tRNA molecules trapped in stalled 50S ribosomal subunits, and thus maintains levels of free tRNAs and 50S ribosomes. This Nitrobacter winogradskyi (strain ATCC 25391 / DSM 10237 / CIP 104748 / NCIMB 11846 / Nb-255) protein is Peptidyl-tRNA hydrolase.